The chain runs to 775 residues: Endothelin-converting enzyme-like 1 (775 aa).

Residues 1-61 (MEAPYSMTAH…LPRWNRREVC (61 aa)) are Cytoplasmic-facing. A disordered region spans residues 30 to 52 (GTSLPPGFPRGSGRSASGSRSGL). Residues 32-52 (SLPPGFPRGSGRSASGSRSGL) are compositionally biased toward low complexity. Residues 62–82 (LLSGLVFAAGLCAILAAMLAL) traverse the membrane as a helical; Signal-anchor for type II membrane protein segment. Topologically, residues 83–775 (KYLGPGAAGG…MNPVHKCSVW (693 aa)) are lumenal. A Peptidase M13 domain is found at 99–775 (GCPERKAFAR…MNPVHKCSVW (677 aa)). Disulfide bonds link C124–C760, C132–C720, C188–C441, and C649–C772. Residues N255 and N322 are each glycosylated (N-linked (GlcNAc...) asparagine). H612 contributes to the Zn(2+) binding site. The active site involves E613. Zn(2+) is bound at residue H616. N-linked (GlcNAc...) asparagine glycosylation occurs at N656. Residue E672 coordinates Zn(2+). D676 (proton donor) is an active-site residue.

Belongs to the peptidase M13 family. Zn(2+) is required as a cofactor.

Its subcellular location is the membrane. May contribute to the degradation of peptide hormones and be involved in the inactivation of neuronal peptides. This is Endothelin-converting enzyme-like 1 (Ecel1) from Mus musculus (Mouse).